The chain runs to 62 residues: Large ribosomal subunit protein bL28 (62 aa).

The protein belongs to the bacterial ribosomal protein bL28 family.

The chain is Large ribosomal subunit protein bL28 from Streptococcus thermophilus (strain CNRZ 1066).